The primary structure comprises 304 residues: Aspartate carbamoyltransferase catalytic subunit (304 aa).

Positions 53 and 54 each coordinate carbamoyl phosphate. Lys-82 is an L-aspartate binding site. Arg-103, His-131, and Gln-134 together coordinate carbamoyl phosphate. L-aspartate is bound by residues Arg-163 and Arg-224. The carbamoyl phosphate site is built by Leu-263 and Pro-264.

Belongs to the aspartate/ornithine carbamoyltransferase superfamily. ATCase family. Heterooligomer of catalytic and regulatory chains.

It carries out the reaction carbamoyl phosphate + L-aspartate = N-carbamoyl-L-aspartate + phosphate + H(+). It participates in pyrimidine metabolism; UMP biosynthesis via de novo pathway; (S)-dihydroorotate from bicarbonate: step 2/3. In terms of biological role, catalyzes the condensation of carbamoyl phosphate and aspartate to form carbamoyl aspartate and inorganic phosphate, the committed step in the de novo pyrimidine nucleotide biosynthesis pathway. The polypeptide is Aspartate carbamoyltransferase catalytic subunit (Haloquadratum walsbyi (strain DSM 16790 / HBSQ001)).